The primary structure comprises 304 residues: MADTARSVASGMVVALQANYLEVELDVAPDGCPGRLLCTRRTRLSHRGEAVYVGDRVRVEAIDPGQGRAVVAEVEPRHSFLTRPPVANVSLVAVVLAVEQPSFDPDQASRFLLTAERTGLEVILLLTKTDLLSAAALERLVTRLQGWGYDPLAFSSAAGTGIDALRQRLAGAQLSVLCGPSGVGKSSLLNQLCPDLQLRTAAVSGRLQRGRHTTRHVELFPLGPSARVADTPGFNRPDLPEDPQELGVLFPELRKQLDPWPCRFRDCLHRGEPGCGVSTDWERYSLYEAALIEQSSLSRPSRGG.

The CP-type G domain occupies 78–237 (HSFLTRPPVA…VADTPGFNRP (160 aa)). Residues 127-130 (TKTD) and 179-187 (GPSGVGKSS) contribute to the GTP site. Positions 262, 267, 269, and 275 each coordinate Zn(2+).

Belongs to the TRAFAC class YlqF/YawG GTPase family. RsgA subfamily. Monomer. Associates with 30S ribosomal subunit, binds 16S rRNA. Zn(2+) is required as a cofactor.

The protein localises to the cytoplasm. Its function is as follows. One of several proteins that assist in the late maturation steps of the functional core of the 30S ribosomal subunit. Helps release RbfA from mature subunits. May play a role in the assembly of ribosomal proteins into the subunit. Circularly permuted GTPase that catalyzes slow GTP hydrolysis, GTPase activity is stimulated by the 30S ribosomal subunit. In Synechococcus sp. (strain CC9605), this protein is Small ribosomal subunit biogenesis GTPase RsgA.